A 192-amino-acid chain; its full sequence is Putative manganese efflux pump MntP (192 aa).

Transmembrane regions (helical) follow at residues 3–23 (FSAILLLALGLAMDATAVAAA), 36–56 (VLLVAGFFGGAQALMPVIGWL), 65–85 (VQAWDHWIAFVLLAFIGGKML), 112–132 (FVLAIATSIDALAVGITLPML), 136–156 (FAISVVTIGVVTALLSAAGLF), and 171–191 (LAGGVVLIGLGFKILLEHLVL).

Belongs to the MntP (TC 9.B.29) family.

It is found in the cell inner membrane. In terms of biological role, probably functions as a manganese efflux pump. This Sorangium cellulosum (strain So ce56) (Polyangium cellulosum (strain So ce56)) protein is Putative manganese efflux pump MntP.